The chain runs to 528 residues: UDP-glucuronosyltransferase 2A1 (528 aa).

Residues 1 to 21 form the signal peptide; the sequence is MLKNILLCSLQISLLGMSLGG. Residues 22–494 lie on the Extracellular side of the membrane; the sequence is NVLIWPMEGS…FQYHSLDVIG (473 aa). N-linked (GlcNAc...) asparagine glycosylation is present at Asn49. Lys135 carries the post-translational modification N6-succinyllysine. N-linked (GlcNAc...) asparagine glycosylation is present at Asn314. A helical transmembrane segment spans residues 495–515; sequence FLLACVASAILLVAKCCLFIF. The Cytoplasmic segment spans residues 516–528; that stretch reads QKVGKTGKKKKRD.

It belongs to the UDP-glycosyltransferase family.

The protein localises to the membrane. It catalyses the reaction glucuronate acceptor + UDP-alpha-D-glucuronate = acceptor beta-D-glucuronoside + UDP + H(+). It carries out the reaction 16beta,17beta-estriol + UDP-alpha-D-glucuronate = 16beta,17beta-estriol 16-O-(beta-D-glucuronate) + UDP + H(+). The enzyme catalyses 16alpha,17alpha-estriol + UDP-alpha-D-glucuronate = 16alpha,17alpha-estriol 16-O-(beta-D-glucuronate) + UDP + H(+). The catalysed reaction is 17alpha-estradiol + UDP-alpha-D-glucuronate = 17alpha-estradiol 17-O-(beta-D-glucuronate) + UDP + H(+). It catalyses the reaction 17alpha-estradiol + UDP-alpha-D-glucuronate = 17alpha-estradiol 3-O-(beta-D-glucuronate) + UDP + H(+). It carries out the reaction 17beta-estradiol + UDP-alpha-D-glucuronate = 17beta-estradiol 3-O-(beta-D-glucuronate) + UDP + H(+). The enzyme catalyses 17beta-estradiol + UDP-alpha-D-glucuronate = 17beta-estradiol 17-O-(beta-D-glucuronate) + UDP + H(+). The catalysed reaction is testosterone + UDP-alpha-D-glucuronate = testosterone 17-O-(beta-D-glucuronate) + UDP + H(+). It catalyses the reaction epitestosterone + UDP-alpha-D-glucuronate = epitestosterone 17-O-(beta-D-glucuronate) + UDP + H(+). It carries out the reaction lithocholate + UDP-alpha-D-glucuronate = lithocholoyl-3-O-(beta-D-glucuronate) + UDP + H(+). The enzyme catalyses lithocholate + UDP-alpha-D-glucuronate = lithocholoyl-24-O-(beta-D-glucuronate) + UDP. The catalysed reaction is deoxycholate + UDP-alpha-D-glucuronate = deoxycholoyl-24-O-(beta-D-glucuronate) + UDP. It catalyses the reaction hyodeoxycholate + UDP-alpha-D-glucuronate = hyodeoxycholate 6-O-(beta-D-glucuronate) + UDP + H(+). It carries out the reaction hyocholate + UDP-alpha-D-glucuronate = hyocholoyl-24-O-(beta-D-glucuronate) + UDP. Functionally, UDP-glucuronosyltransferase (UGT) that catalyzes phase II biotransformation reactions in which lipophilic substrates are conjugated with glucuronic acid to increase the metabolite's water solubility, thereby facilitating excretion into either the urine or bile. Essential for the elimination and detoxification of drugs, xenobiotics and endogenous compounds. Catalyzes the glucuronidation of endogenous steroid hormones such as androgens (testosterones) and estrogens (estradiol and estriol). Contributes to bile acid (BA) detoxification by catalyzing the glucuronidation of BA substrates, which are natural detergents for dietary lipids absorption. Shows a high affinity to aliphatic odorants such as citronellol as well as olfactory tissue specificity, and therefore may be involved in olfaction. In Mus musculus (Mouse), this protein is UDP-glucuronosyltransferase 2A1.